The following is a 175-amino-acid chain: Alpha-crystallin B chain (175 aa).

Met1 bears the N-acetylmethionine mark. Position 19 is a phosphoserine (Ser19). Residue Ser41 is glycosylated (O-linked (GlcNAc) serine). 2 positions are modified to phosphoserine: Ser45 and Ser59. The region spanning 56-164 is the sHSP domain; it reads RAPSWIDTGL…PERTIPITRE (109 aa). His83 serves as a coordination point for Zn(2+). Lys92 carries the post-translational modification N6-acetyllysine. Zn(2+) is bound by residues His104, Glu106, His111, and His119. The tract at residues 142 to 175 is disordered; it reads VLTVNGPRKQASGPERTIPITREEKPAVTAAPKK. An N6-acetyllysine modification is found at Lys166. O-linked (GlcNAc) threonine glycosylation is present at Thr170.

The protein belongs to the small heat shock protein (HSP20) family. As to quaternary structure, heteromer composed of three CRYAA and one CRYAB subunits. Aggregates with homologous proteins, including the small heat shock protein HSPB1, to form large heteromeric complexes. Inter-subunit bridging via zinc ions enhances stability, which is crucial as there is no protein turn over in the lens. Interacts with HSPBAP1 and TTN/titin. Interacts with TMEM109; in the cellular response to DNA damage. Interacts with DES; binds rapidly during early stages of DES filament assembly and a reduced binding seen in the later stages. Interacts with ATP6V1A and with MTOR, forming a ternary complex. Lens as well as other tissues.

Its subcellular location is the cytoplasm. It localises to the nucleus. The protein resides in the secreted. The protein localises to the lysosome. Functionally, may contribute to the transparency and refractive index of the lens. Has chaperone-like activity, preventing aggregation of various proteins under a wide range of stress conditions. In lens epithelial cells, stabilizes the ATP6V1A protein, preventing its degradation by the proteasome. The protein is Alpha-crystallin B chain (CRYAB) of Spalax judaei (Judean Mountains blind mole rat).